The primary structure comprises 247 residues: PHD finger protein ALFIN-LIKE 3 (247 aa).

A disordered region spans residues 147 to 178 (DRSGVDSSGKSKHSTKRTGEGQVKRSRVVAEE). The segment at 188–240 (ETFCGTCGGLYNANEFWIGCDICERWFHGKCVRITPAKAEHIKHYKCPDCSSS) adopts a PHD-type zinc-finger fold.

The protein belongs to the Alfin family. Interacts with H3K4me3 and to a lesser extent with H3K4me2.

The protein resides in the nucleus. Histone-binding component that specifically recognizes H3 tails trimethylated on 'Lys-4' (H3K4me3), which mark transcription start sites of virtually all active genes. The protein is PHD finger protein ALFIN-LIKE 3 of Oryza sativa subsp. indica (Rice).